Reading from the N-terminus, the 146-residue chain is Large ribosomal subunit protein uL15 (146 aa).

The span at M1–R13 shows a compositional bias: basic and acidic residues. The disordered stretch occupies residues M1–L57. A compositionally biased stretch (gly residues) spans T23–Q35.

It belongs to the universal ribosomal protein uL15 family. In terms of assembly, part of the 50S ribosomal subunit.

Binds to the 23S rRNA. This is Large ribosomal subunit protein uL15 from Streptococcus thermophilus (strain CNRZ 1066).